We begin with the raw amino-acid sequence, 142 residues long: Large ribosomal subunit protein uL13 (142 aa).

Belongs to the universal ribosomal protein uL13 family. Part of the 50S ribosomal subunit.

This protein is one of the early assembly proteins of the 50S ribosomal subunit, although it is not seen to bind rRNA by itself. It is important during the early stages of 50S assembly. The protein is Large ribosomal subunit protein uL13 of Bordetella avium (strain 197N).